The following is a 207-amino-acid chain: Outer-membrane lipoprotein LolB (207 aa).

An N-terminal signal peptide occupies residues 1-23; the sequence is MINLRRFTKFTLAGLTALSLLGG. C24 is lipidated: N-palmitoyl cysteine. The S-diacylglycerol cysteine moiety is linked to residue C24.

This sequence belongs to the LolB family. Monomer.

Its subcellular location is the cell outer membrane. Its function is as follows. Plays a critical role in the incorporation of lipoproteins in the outer membrane after they are released by the LolA protein. The sequence is that of Outer-membrane lipoprotein LolB from Shewanella amazonensis (strain ATCC BAA-1098 / SB2B).